A 216-amino-acid chain; its full sequence is Probable csgAB operon transcriptional regulatory protein (216 aa).

The HTH luxR-type domain occupies 149-214 (NSTESALLTH…QAVSWANDNL (66 aa)). The segment at residues 173 to 192 (NNEIARSLFISENTVKTHLY) is a DNA-binding region (H-T-H motif).

The master regulator for adhesive curli fimbriae expression; necessary for transcription of the csgAB operon. Plays a positive role in biofilm formation. This Salmonella typhimurium (strain LT2 / SGSC1412 / ATCC 700720) protein is Probable csgAB operon transcriptional regulatory protein.